The chain runs to 141 residues: MASTIHLDVVSAEESIFSGEAEFVAAPAKLGEVGIYPNHAPLITTIKPGVLRVKVANGGEEQAIYISGGLLEVQPGVITVLADTAIRGHDLDEVKAIEAKRAAEEALRNNASGVDYARAQAELSEALAQLQTIEQLRKTTH.

The protein belongs to the ATPase epsilon chain family. As to quaternary structure, F-type ATPases have 2 components, CF(1) - the catalytic core - and CF(0) - the membrane proton channel. CF(1) has five subunits: alpha(3), beta(3), gamma(1), delta(1), epsilon(1). CF(0) has three main subunits: a, b and c.

It localises to the cell inner membrane. Functionally, produces ATP from ADP in the presence of a proton gradient across the membrane. This is ATP synthase epsilon chain from Methylobacillus flagellatus (strain ATCC 51484 / DSM 6875 / VKM B-1610 / KT).